Consider the following 471-residue polypeptide: Thiohydroximate-O-sulfate sulfur/sulfate-lyase (nitrile-forming) NSP2 (471 aa).

The region spanning 2–144 (VQKVEARGGE…LHSLGAYISS (143 aa)) is the Jacalin-type lectin domain. Kelch repeat units follow at residues 178 to 226 (KIFS…VRMV), 231 to 277 (SLYV…SMTA), 281 to 330 (NVYV…VVQG), 332 to 379 (VWVV…VVGK), 381 to 435 (ILVF…GWSA), and 446 to 471 (GLVM…VDSA). The active-site Proton donor is arginine 238. 5 residues coordinate a (Z)-N-(sulfonatooxy)alkanimidothioate: arginine 238, serine 271, arginine 293, glycine 322, and valine 371. Arginine 293 acts as the Proton donor in catalysis. Glutamate 387, aspartate 391, and histidine 395 together coordinate Fe(2+). Tryptophan 433 serves as a coordination point for a (Z)-N-(sulfonatooxy)alkanimidothioate.

Belongs to the jacalin lectin family. Requires Fe(2+) as cofactor. In terms of tissue distribution, expressed only in seeds.

The enzyme catalyses a (Z)-N-(sulfonatooxy)alkanimidothioate = a nitrile + sulfur + sulfate. The catalysed reaction is (Z)-phenyl-N-(sulfonatooxy)methanimidothioate = phenylacetonitrile + sulfur + sulfate. It carries out the reaction (Z)-N-(sulfonatooxy)prop-2-enimidothioate = but-3-enenitrile + sulfur + sulfate. It catalyses the reaction (Z)-(indol-3-yl)-N-(sulfonatooxy)methanimidothioate = (indol-3-yl)acetonitrile + sulfur + sulfate. The presence of Fe(2+) supports lyase activity in a dose-dependent manner with both benzylglucosinolate and 2-propenylglucosinolate as substrates. More active at pH 7.4 than at pH 6. In terms of biological role, specifier protein responsible for constitutive and herbivore-induced simple nitrile formation, especially in seeds. Promotes simple nitriles, but not epithionitrile or thiocyanate formation. Converts allylglucosinolate (allyl-GSL), 2-propenylglucosinolate (sinigrin), indol-3-ylmethylglucosinolate (glucobrassicin), benzylisothiocyanate and benzylglucosinolate (glucotropaeolin) to their corresponding simple nitriles in the presence of myrosinase. Catalyzes mainly the conversion of benzylisothiocyanate when benzylglucosinolate is used as the initial substrate of myrosinase. Involved in the regulation of glucosinolate content in seeds, during stratification and germination. This Arabidopsis thaliana (Mouse-ear cress) protein is Thiohydroximate-O-sulfate sulfur/sulfate-lyase (nitrile-forming) NSP2.